Consider the following 466-residue polypeptide: 3-isopropylmalate dehydratase large subunit 1 (466 aa).

[4Fe-4S] cluster-binding residues include Cys347, Cys407, and Cys410.

The protein belongs to the aconitase/IPM isomerase family. LeuC type 1 subfamily. As to quaternary structure, heterodimer of LeuC and LeuD. The cofactor is [4Fe-4S] cluster.

The catalysed reaction is (2R,3S)-3-isopropylmalate = (2S)-2-isopropylmalate. The protein operates within amino-acid biosynthesis; L-leucine biosynthesis; L-leucine from 3-methyl-2-oxobutanoate: step 2/4. Its function is as follows. Catalyzes the isomerization between 2-isopropylmalate and 3-isopropylmalate, via the formation of 2-isopropylmaleate. The polypeptide is 3-isopropylmalate dehydratase large subunit 1 (Salmonella choleraesuis (strain SC-B67)).